The primary structure comprises 602 residues: Elongation factor 4 (602 aa).

The region spanning 7–189 (RKIRNFSIIA…AIVKNIPPPT (183 aa)) is the tr-type G domain. Residues 19-24 (DHGKST) and 136-139 (NKID) each bind GTP.

The protein belongs to the TRAFAC class translation factor GTPase superfamily. Classic translation factor GTPase family. LepA subfamily.

The protein localises to the cell membrane. It carries out the reaction GTP + H2O = GDP + phosphate + H(+). In terms of biological role, required for accurate and efficient protein synthesis under certain stress conditions. May act as a fidelity factor of the translation reaction, by catalyzing a one-codon backward translocation of tRNAs on improperly translocated ribosomes. Back-translocation proceeds from a post-translocation (POST) complex to a pre-translocation (PRE) complex, thus giving elongation factor G a second chance to translocate the tRNAs correctly. Binds to ribosomes in a GTP-dependent manner. In Alkaliphilus metalliredigens (strain QYMF), this protein is Elongation factor 4.